Consider the following 134-residue polypeptide: Large ribosomal subunit protein bL20 (134 aa).

It belongs to the bacterial ribosomal protein bL20 family.

Its function is as follows. Binds directly to 23S ribosomal RNA and is necessary for the in vitro assembly process of the 50S ribosomal subunit. It is not involved in the protein synthesizing functions of that subunit. This Rhizobium etli (strain CIAT 652) protein is Large ribosomal subunit protein bL20.